The primary structure comprises 325 residues: DNA-directed RNA polymerase subunit alpha (325 aa).

The tract at residues 1 to 231 (MQTSLLKPKI…DQLSVFAALE (231 aa)) is alpha N-terminal domain (alpha-NTD). The interval 246 to 325 (IDPILLRPVD…ENWPPAGLDK (80 aa)) is alpha C-terminal domain (alpha-CTD).

This sequence belongs to the RNA polymerase alpha chain family. As to quaternary structure, homodimer. The RNAP catalytic core consists of 2 alpha, 1 beta, 1 beta' and 1 omega subunit. When a sigma factor is associated with the core the holoenzyme is formed, which can initiate transcription.

The catalysed reaction is RNA(n) + a ribonucleoside 5'-triphosphate = RNA(n+1) + diphosphate. Functionally, DNA-dependent RNA polymerase catalyzes the transcription of DNA into RNA using the four ribonucleoside triphosphates as substrates. The chain is DNA-directed RNA polymerase subunit alpha from Burkholderia mallei (strain NCTC 10247).